Consider the following 297-residue polypeptide: MKMKRTASSNSEAQSYNESPHSPLRFHSPLSDAGDLPESRYVSPEGSPFKIENPKSIVAGNKLTQFSPLPSPIPPPPPQFPPPRRQRNARVPMNSSSDKSPSSMVVHNSWVREDGGQTTTRKAGAPINGEESTRTTVNRARGDDLVSLTALGFRITEVILCVISFSIMAADKTQGWSGDSYDRYKEYRYCLAVNVIAFVYSAFEACDAACYIAKESYMINCGFHDLFVFSMDQLLAYLLMSASSCAATRVDDWVSNWGKDEFTQMATASIAVSFLAFGAFAVSALISSYRLFTHASS.

Residues M1–P20 show a composition bias toward polar residues. Residues M1 to T135 form a disordered region. Residues M1–T149 are Cytoplasmic-facing. Positions L69–P83 are enriched in pro residues. A helical transmembrane segment spans residues A150 to A170. Topologically, residues D171–L191 are extracellular. A helical transmembrane segment spans residues A192 to I212. Topologically, residues A213–D225 are cytoplasmic. The chain crosses the membrane as a helical span at residues L226 to A246. Residues A247 to M265 are Extracellular-facing. A helical transmembrane segment spans residues A266 to I286. Over S287–S297 the chain is Cytoplasmic.

Belongs to the Casparian strip membrane proteins (CASP) family. In terms of assembly, homodimer and heterodimers.

Its subcellular location is the cell membrane. This is CASP-like protein 4A2 from Arabidopsis thaliana (Mouse-ear cress).